The sequence spans 830 residues: P-selectin (830 aa).

The first 41 residues, 1–41 (MANCQIAILYQRFQRVVFGISQLLCFSALISELTNQKEVAA), serve as a signal peptide directing secretion. The Extracellular portion of the chain corresponds to 42-771 (WTYHYSTKAY…QAGPLTIQEA (730 aa)). N-linked (GlcNAc...) asparagine glycans are attached at residues Asn54 and Asn98. The region spanning 58–158 (KYCQNRYTDL…HCLKKKHALC (101 aa)) is the C-type lectin domain. Disulfide bonds link Cys60-Cys158, Cys131-Cys150, Cys163-Cys174, Cys168-Cys183, Cys185-Cys194, Cys200-Cys244, Cys230-Cys257, Cys262-Cys306, Cys292-Cys319, Cys324-Cys368, Cys354-Cys381, Cys386-Cys430, Cys416-Cys443, Cys448-Cys492, Cys478-Cys505, Cys510-Cys554, Cys540-Cys567, Cys572-Cys616, Cys602-Cys629, Cys642-Cys686, Cys672-Cys699, Cys704-Cys748, and Cys734-Cys761. 3 residues coordinate Ca(2+): Glu121, Asn123, and Asn124. Asn123 contributes to the a carbohydrate binding site. Glu133 and Asn146 together coordinate a carbohydrate. The Ca(2+) site is built by Asn146 and Asp147. The EGF-like domain occupies 159–195 (YTASCQDMSCSKQGECLETIGNYTCSCYPGFYGPECE). Residue Asn180 is glycosylated (N-linked (GlcNAc...) asparagine). Sushi domains follow at residues 198–259 (RECG…QCLA), 260–321 (AQCP…VCKA), 322–383 (VQCQ…TCEA), 384–445 (ISCE…VCQA), 446–507 (LQCQ…ECQA), 508–569 (IPCT…MCEA), 570–631 (IKCP…TCKG), 640–701 (VQCP…ACRA), and 702–763 (VKCS…TCQA). N-linked (GlcNAc...) asparagine glycans are attached at residues Asn212 and Asn219. N-linked (GlcNAc...) asparagine glycosylation occurs at Asn411. N-linked (GlcNAc...) asparagine glycosylation occurs at Asn460. An N-linked (GlcNAc...) asparagine glycan is attached at Asn518. N-linked (GlcNAc...) asparagine glycosylation occurs at Asn665. N-linked (GlcNAc...) asparagine glycosylation is found at Asn716, Asn723, and Asn741. Residues 772–795 (LTYFGGAVASTIGLIMGGTLLALL) traverse the membrane as a helical segment. The Cytoplasmic portion of the chain corresponds to 796–830 (RKRFRQKDDGKCPLNPHSHLGTYGVFTNAAFDPSP). The S-palmitoyl cysteine; alternate moiety is linked to residue Cys807. Residue Cys807 is the site of S-stearoyl cysteine; alternate attachment. The Endocytosis signal signature appears at 818–821 (YGVF). Positions 821 to 830 (FTNAAFDPSP) are interaction with SNX17.

Belongs to the selectin/LECAM family. As to quaternary structure, interacts with SNX17. Interacts with SELPLG/PSGL1 and PODXL2 and mediates neutrophil adhesion and leukocyte rolling. This interaction requires the sialyl-Lewis X epitope of SELPLG and PODXL2, and specific tyrosine sulfation on SELPLG. Interacts (via C-type lectin domain) with alpha-IIb/beta3 integrin ITGA2B:ITGB3 and alpha-V/beta-3 integrin ITGAV:ITGB3. Interacts with alpha5/beta1 integrin ITGA5:ITGB1 and alpha4/beta1 integrin ITGA4:ITGB. Stored in the alpha-granules of platelets and Weibel-Palade bodies of endothelial cells. Upon cell activation by agonists, P-selectin is transported rapidly to the cell surface.

The protein localises to the cell membrane. Its function is as follows. Ca(2+)-dependent receptor for myeloid cells that binds to carbohydrates on neutrophils and monocytes. Mediates the interaction of activated endothelial cells or platelets with leukocytes. The ligand recognized is sialyl-Lewis X. Mediates rapid rolling of leukocyte rolling over vascular surfaces during the initial steps in inflammation through interaction with SELPLG. Mediates cell-cell interactions and cell adhesion via the interaction with integrin alpha-IIb/beta3 (ITGA2B:ITGB3) and integrin alpha-V/beta-3 (ITGAV:ITGB3). The polypeptide is P-selectin (SELP) (Homo sapiens (Human)).